The sequence spans 429 residues: Glutamate-1-semialdehyde 2,1-aminomutase 2 (429 aa).

Lys-268 carries the post-translational modification N6-(pyridoxal phosphate)lysine.

It belongs to the class-III pyridoxal-phosphate-dependent aminotransferase family. HemL subfamily. In terms of assembly, homodimer. The cofactor is pyridoxal 5'-phosphate.

The protein localises to the cytoplasm. It catalyses the reaction (S)-4-amino-5-oxopentanoate = 5-aminolevulinate. It participates in porphyrin-containing compound metabolism; protoporphyrin-IX biosynthesis; 5-aminolevulinate from L-glutamyl-tRNA(Glu): step 2/2. The sequence is that of Glutamate-1-semialdehyde 2,1-aminomutase 2 from Staphylococcus aureus (strain MRSA252).